The sequence spans 155 residues: D-aminoacyl-tRNA deacylase (155 aa).

The Gly-cisPro motif, important for rejection of L-amino acids signature appears at 147 to 148; sequence GP.

It belongs to the DTD family. In terms of assembly, homodimer.

Its subcellular location is the cytoplasm. The catalysed reaction is glycyl-tRNA(Ala) + H2O = tRNA(Ala) + glycine + H(+). It catalyses the reaction a D-aminoacyl-tRNA + H2O = a tRNA + a D-alpha-amino acid + H(+). In terms of biological role, an aminoacyl-tRNA editing enzyme that deacylates mischarged D-aminoacyl-tRNAs. Also deacylates mischarged glycyl-tRNA(Ala), protecting cells against glycine mischarging by AlaRS. Acts via tRNA-based rather than protein-based catalysis; rejects L-amino acids rather than detecting D-amino acids in the active site. By recycling D-aminoacyl-tRNA to D-amino acids and free tRNA molecules, this enzyme counteracts the toxicity associated with the formation of D-aminoacyl-tRNA entities in vivo and helps enforce protein L-homochirality. The chain is D-aminoacyl-tRNA deacylase from Corynebacterium urealyticum (strain ATCC 43042 / DSM 7109).